The following is a 361-amino-acid chain: Beta-hexosaminidase (361 aa).

Residues Asp69, Arg77, Arg144, and 174–175 (KH) contribute to the substrate site. His187 functions as the Proton donor/acceptor in the catalytic mechanism. Catalysis depends on Asp258, which acts as the Nucleophile.

Belongs to the glycosyl hydrolase 3 family. NagZ subfamily.

It localises to the cytoplasm. It carries out the reaction Hydrolysis of terminal non-reducing N-acetyl-D-hexosamine residues in N-acetyl-beta-D-hexosaminides.. It functions in the pathway cell wall biogenesis; peptidoglycan recycling. In terms of biological role, plays a role in peptidoglycan recycling by cleaving the terminal beta-1,4-linked N-acetylglucosamine (GlcNAc) from peptide-linked peptidoglycan fragments, giving rise to free GlcNAc, anhydro-N-acetylmuramic acid and anhydro-N-acetylmuramic acid-linked peptides. The polypeptide is Beta-hexosaminidase (Neisseria meningitidis serogroup C (strain 053442)).